The primary structure comprises 93 residues: MTRKKTNPFVARHLLAKIEKVNMKEEKEIIVTWSRASSILPAMVGHTIAIHNGKEHIPIYITNPMVGRKLGEFVPTRHFTSYESTRKDTKSRR.

The protein belongs to the universal ribosomal protein uS19 family.

The protein localises to the plastid. Its subcellular location is the chloroplast. Its function is as follows. Protein S19 forms a complex with S13 that binds strongly to the 16S ribosomal RNA. This Zea mays (Maize) protein is Small ribosomal subunit protein uS19c (rps19-A).